A 407-amino-acid polypeptide reads, in one-letter code: D-3-phosphoglycerate dehydrogenase (407 aa).

NAD(+)-binding positions include 161 to 162 (HI), D181, 238 to 240 (ASR), and D264. Residue R240 is part of the active site. E269 is a catalytic residue. H292 (proton donor) is an active-site residue. Residue 292 to 295 (HIGG) coordinates NAD(+). One can recognise an ACT domain in the interval 340–407 (RILNIHNNKP…PNSIKTRVLY (68 aa)).

Belongs to the D-isomer specific 2-hydroxyacid dehydrogenase family.

It catalyses the reaction (2R)-3-phosphoglycerate + NAD(+) = 3-phosphooxypyruvate + NADH + H(+). The catalysed reaction is (R)-2-hydroxyglutarate + NAD(+) = 2-oxoglutarate + NADH + H(+). Its pathway is amino-acid biosynthesis; L-serine biosynthesis; L-serine from 3-phospho-D-glycerate: step 1/3. Catalyzes the reversible oxidation of 3-phospho-D-glycerate to 3-phosphonooxypyruvate, the first step of the phosphorylated L-serine biosynthesis pathway. Also catalyzes the reversible oxidation of 2-hydroxyglutarate to 2-oxoglutarate. The polypeptide is D-3-phosphoglycerate dehydrogenase (serA) (Dictyostelium discoideum (Social amoeba)).